Consider the following 1700-residue polypeptide: Ras-responsive element-binding protein 1 (1700 aa).

Residues 31-63 form a disordered region; it reads TENGGSPQGIKSPMKPPGPNRIGRRNQETKEEK. Serine 36 and serine 42 each carry phosphoserine. 3 consecutive C2H2-type zinc fingers follow at residues 66–88, 97–119, and 125–147; these read YNCP…IRQH, HACS…MLVH, and YKCT…MKIH. Residues 146–195 are disordered; it reads IHEKDTNSTTAAAPPSPLKRRRLSSKRKLSHDAESEDPGPAKKMVEDGQS. Phosphoserine is present on serine 161. The span at 163 to 174 shows a compositional bias: basic residues; the sequence is LKRRRLSSKRKL. 2 positions are modified to phosphoserine: serine 175 and serine 180. The segment covering 184–195 has biased composition (basic and acidic residues); that stretch reads GPAKKMVEDGQS. The C2H2-type 4 zinc finger occupies 206–228; sequence FHCPVCFKEFVCKYELETHMETH. Phosphoserine is present on serine 229. 2 C2H2-type zinc fingers span residues 233 to 256 and 314 to 336; these read LRCD…ALVH and FVCD…RQSH. Glycyl lysine isopeptide (Lys-Gly) (interchain with G-Cter in SUMO2) cross-links involve residues lysine 433, lysine 500, lysine 549, lysine 564, lysine 591, and lysine 611. A Glycyl lysine isopeptide (Lys-Gly) (interchain with G-Cter in SUMO1); alternate cross-link involves residue lysine 613. Lysine 613 is covalently cross-linked (Glycyl lysine isopeptide (Lys-Gly) (interchain with G-Cter in SUMO2); alternate). Lysine 622 participates in a covalent cross-link: Glycyl lysine isopeptide (Lys-Gly) (interchain with G-Cter in SUMO2). C2H2-type zinc fingers lie at residues 641–663, 669–691, 697–720, 751–782, and 788–813; these read YPCR…VRSH, YQCN…IRTH, YICK…RKKH, TVCR…GGCH, and FECK…QHLH. Glycyl lysine isopeptide (Lys-Gly) (interchain with G-Cter in SUMO2) cross-links involve residues lysine 855, lysine 883, and lysine 911. 2 disordered regions span residues 939–991 and 1092–1177; these read IPKS…SLET and ADPG…AVDL. The span at 944–961 shows a compositional bias: basic and acidic residues; sequence KKGDKDTVVPSDAKKPEP. Serine 970 carries the phosphoserine modification. Residues 1097–1111 are compositionally biased toward polar residues; that stretch reads SITSSNTVATDSPGS. A phosphoserine mark is found at serine 1125, serine 1137, and serine 1138. A compositionally biased stretch (low complexity) spans 1137–1146; it reads SSPEEALPTE. A compositionally biased stretch (basic residues) spans 1155 to 1165; sequence SRKRGRKRGLR. Phosphoserine occurs at positions 1172, 1179, 1180, and 1230. Disordered regions lie at residues 1195-1235, 1273-1368, 1383-1521, and 1564-1670; these read TNKF…AEDR, HTDS…QSLD, SEAG…RKKV, and VRHQ…SPAA. The C2H2-type 12 zinc-finger motif lies at 1251–1273; the sequence is INCPHCPRVFPWASSLQRHMLTH. Residues 1273-1285 show a composition bias toward low complexity; sequence HTDSQSDTDTLTT. Acidic residues predominate over residues 1327 to 1346; that stretch reads SEEEEEKETEENPEPEEECR. The C2H2-type 13 zinc finger occupies 1400–1422; the sequence is HACDTCGKNFKFLGTLSRHKKAH. Phosphoserine occurs at positions 1450 and 1452. Positions 1492–1507 are enriched in basic and acidic residues; that stretch reads TAEKRGDGDKRPKTDS. 2 consecutive C2H2-type zinc fingers follow at residues 1520-1542 and 1548-1570; these read KVCS…MRSH and YKCQ…QRIH. Positions 1564-1580 are enriched in basic residues; it reads VRHQRIHQKARHSKHHG. Phosphoserine is present on residues serine 1593 and serine 1606. The segment covering 1645-1660 has biased composition (low complexity); that stretch reads AEQAAEPSAPKEQASP. Serine 1667 bears the Phosphoserine mark.

Belongs to the krueppel C2H2-type zinc-finger protein family. As to quaternary structure, interacts with NEUROD1. Interacts with AR. In terms of tissue distribution, expressed in splenic B-cells.

It localises to the nucleus speckle. Transcription factor that binds specifically to the RAS-responsive elements (RRE) of gene promoters. Represses the angiotensinogen gene. Negatively regulates the transcriptional activity of AR. Potentiates the transcriptional activity of NEUROD1. Binds specifically to the allelic variant of the CDKN2A promoter present in Balb/c mice, which leads to a down-regulation of CDKN2A expression in this strain, and, as a consequence, to an elevated susceptibility to pristane-induced tumors. Promotes brown adipocyte differentiation. May be involved in Ras/Raf-mediated cell differentiation by enhancing calcitonin expression. This is Ras-responsive element-binding protein 1 (Rreb1) from Mus musculus (Mouse).